The primary structure comprises 330 residues: MLDDWIYIFLPRISCALAWVVNPIFVYFIFTEKSQTFGNYRYLLLFFALFNLLYSVVNVVVPIDIHNYRYCFFLILRHGWFVEISDFHYHMAAGRCSLVASSYALLLVHFIYRFLVIYDSSLTRLHFHWYMTGSLLLSVAYFVAWQTICWFLGYASVEMRQYVREEIRRTYGRDSMDFNMIGTLYDEASYEAKFKSWLATIIWSSISVASISAYMVLALLTIHKLKKMSCNASKKTSKFQFELLRALIVQTLIPIVISFSPCLLCWYTPIFGIQLPREFNYFEVGALGLFSFVDPIAIILCLPIFRHRISNFWKTSTTSLEEPSTKVRNI.

7 consecutive transmembrane segments (helical) span residues 6–26 (IYIFLPRISCALAWVVNPIFV), 43–63 (LLLFFALFNLLYSVVNVVVPI), 98–118 (LVASSYALLLVHFIYRFLVIY), 135–155 (LLLSVAYFVAWQTICWFLGYA), 200–220 (TIIWSSISVASISAYMVLALL), 253–273 (IPIVISFSPCLLCWYTPIFGI), and 285–305 (GALGLFSFVDPIAIILCLPIF).

It belongs to the nematode receptor-like protein srj family.

It is found in the membrane. The sequence is that of Serpentine receptor class J-38 (srj-38) from Caenorhabditis elegans.